Here is a 323-residue protein sequence, read N- to C-terminus: Cysteine synthase A (323 aa).

2 residues coordinate hydrogen sulfide: asparagine 8 and arginine 35. Lysine 42 bears the N6-(pyridoxal phosphate)lysine mark. Pyridoxal 5'-phosphate is bound by residues asparagine 72 and 177–181; that span reads GTGGT. Leucine 269 provides a ligand contact to hydrogen sulfide. Serine 273 lines the pyridoxal 5'-phosphate pocket.

The protein belongs to the cysteine synthase/cystathionine beta-synthase family. As to quaternary structure, homodimer. Requires pyridoxal 5'-phosphate as cofactor.

The catalysed reaction is O-acetyl-L-serine + hydrogen sulfide = L-cysteine + acetate. It functions in the pathway amino-acid biosynthesis; L-cysteine biosynthesis; L-cysteine from L-serine: step 2/2. In terms of biological role, two cysteine synthase enzymes are found. Both catalyze the same reaction. Cysteine synthase B can also use thiosulfate in place of sulfide to give cysteine thiosulfonate as a product. The sequence is that of Cysteine synthase A (cysK) from Salmonella typhi.